Consider the following 316-residue polypeptide: Pantothenate kinase (316 aa).

An ATP-binding site is contributed by 95–102 (GSVAVGKS).

It belongs to the prokaryotic pantothenate kinase family.

Its subcellular location is the cytoplasm. It carries out the reaction (R)-pantothenate + ATP = (R)-4'-phosphopantothenate + ADP + H(+). Its pathway is cofactor biosynthesis; coenzyme A biosynthesis; CoA from (R)-pantothenate: step 1/5. The polypeptide is Pantothenate kinase (Yersinia pseudotuberculosis serotype O:3 (strain YPIII)).